Consider the following 232-residue polypeptide: Enolase-phosphatase E1 (232 aa).

Belongs to the HAD-like hydrolase superfamily. MasA/MtnC family. As to quaternary structure, monomer. It depends on Mg(2+) as a cofactor.

The catalysed reaction is 5-methylsulfanyl-2,3-dioxopentyl phosphate + H2O = 1,2-dihydroxy-5-(methylsulfanyl)pent-1-en-3-one + phosphate. Its pathway is amino-acid biosynthesis; L-methionine biosynthesis via salvage pathway; L-methionine from S-methyl-5-thio-alpha-D-ribose 1-phosphate: step 3/6. It participates in amino-acid biosynthesis; L-methionine biosynthesis via salvage pathway; L-methionine from S-methyl-5-thio-alpha-D-ribose 1-phosphate: step 4/6. In terms of biological role, bifunctional enzyme that catalyzes the enolization of 2,3-diketo-5-methylthiopentyl-1-phosphate (DK-MTP-1-P) into the intermediate 2-hydroxy-3-keto-5-methylthiopentenyl-1-phosphate (HK-MTPenyl-1-P), which is then dephosphorylated to form the acireductone 1,2-dihydroxy-3-keto-5-methylthiopentene (DHK-MTPene). The chain is Enolase-phosphatase E1 from Sorangium cellulosum (strain So ce56) (Polyangium cellulosum (strain So ce56)).